The chain runs to 121 residues: Small ribosomal subunit protein bS16 (121 aa).

Basic and acidic residues predominate over residues 97–114 (LAKAKTKDEENDNSKVES). A disordered region spans residues 97–121 (LAKAKTKDEENDNSKVESEGNEAES).

This sequence belongs to the bacterial ribosomal protein bS16 family.

This is Small ribosomal subunit protein bS16 from Prochlorococcus marinus (strain AS9601).